Consider the following 208-residue polypeptide: Phosphoheptose isomerase (208 aa).

The SIS domain maps to Met38 to Pro200. A substrate-binding site is contributed by Asn53–Gly55. The Zn(2+) site is built by His62 and Glu66. Substrate-binding positions include Glu66, Asn95 to Asp96, Ser121 to Ser123, Ser126, and Gln173. Zn(2+) contacts are provided by Gln173 and His181.

It belongs to the SIS family. GmhA subfamily. Homotetramer. Zn(2+) is required as a cofactor.

The protein localises to the cytoplasm. The catalysed reaction is 2 D-sedoheptulose 7-phosphate = D-glycero-alpha-D-manno-heptose 7-phosphate + D-glycero-beta-D-manno-heptose 7-phosphate. Its pathway is carbohydrate biosynthesis; D-glycero-D-manno-heptose 7-phosphate biosynthesis; D-glycero-alpha-D-manno-heptose 7-phosphate and D-glycero-beta-D-manno-heptose 7-phosphate from sedoheptulose 7-phosphate: step 1/1. Functionally, catalyzes the isomerization of sedoheptulose 7-phosphate in D-glycero-D-manno-heptose 7-phosphate. The polypeptide is Phosphoheptose isomerase (Nitratidesulfovibrio vulgaris (strain ATCC 29579 / DSM 644 / CCUG 34227 / NCIMB 8303 / VKM B-1760 / Hildenborough) (Desulfovibrio vulgaris)).